Reading from the N-terminus, the 98-residue chain is Biogenesis of lysosome-related organelles complex 1 subunit SNN1 (98 aa).

A coiled-coil region spans residues 55–98 (MDEQELLQEEGSLKEELARVNQLKKRLDKLTELYAELARKCGAL).

It belongs to the SNAPIN family. As to quaternary structure, component of the biogenesis of lysosome-related organelles complex-1 (BLOC-1).

It is found in the endosome. Component of the biogenesis of lysosome-related organelles complex-1 (BLOC-1), a complex involved in endosomal cargo sorting. This chain is Biogenesis of lysosome-related organelles complex 1 subunit SNN1 (SNN1), found in Eremothecium gossypii (strain ATCC 10895 / CBS 109.51 / FGSC 9923 / NRRL Y-1056) (Yeast).